The following is a 1492-amino-acid chain: Copper-transporting ATPase 1 (1492 aa).

Residues 1 to 645 lie on the Cytoplasmic side of the membrane; it reads MEPNMDANSI…KREIKQWRGS (645 aa). HMA domains are found at residues 8-74 and 85-151; these read NSIT…FDAL and TNTV…LDMG. 3 residues coordinate Cu(+): Thr-18, Cys-19, and Cys-22. Thr-152 is modified (phosphothreonine). Residues 171–237 enclose the HMA 3 domain; the sequence is VLLKMRVEGM…QIEAVGFPAF (67 aa). Positions 182 and 185 each coordinate Cu(+). Ser-270 is modified (phosphoserine). One can recognise an HMA 4 domain in the interval 277–343; it reads SAITFTIDGM…AIEAVSPGQY (67 aa). Positions 288 and 291 each coordinate Cu(+). Thr-327 is subject to Phosphothreonine. Ser-339, Ser-353, Ser-357, and Ser-362 each carry phosphoserine. 3 HMA domains span residues 377-443, 480-546, and 556-622; these read QEVV…FDAV, NKCY…FGAV, and GILE…FEAS. Positions 388, 391, 491, 494, 567, and 570 each coordinate Cu(+). The chain crosses the membrane as a helical span at residues 646–667; the sequence is FLVSLFFCIPVMGLMIYMMVMD. The Extracellular segment spans residues 668-706; the sequence is HHLATLNHNQNMSNEEMINMHSSMFLERQILPGLSIMNL. Asn-678 is a glycosylation site (N-linked (GlcNAc...) asparagine). The helical transmembrane segment at 707-726 threads the bilayer; sequence LSLLLCLPVQFCGGWYFYIQ. Topologically, residues 727–733 are cytoplasmic; that stretch reads AYKALRH. A helical membrane pass occupies residues 734 to 754; the sequence is KTANMDVLIVLATTIAFAYSL. The Extracellular segment spans residues 755-773; sequence VILLVAMYERAKVNPITFF. The helical transmembrane segment at 774-794 threads the bilayer; it reads DTPPMLFVFIALGRWLEHIAK. Residues 795–927 lie on the Cytoplasmic side of the membrane; it reads GKTSEALAKL…SKAPIQQFAD (133 aa). The chain crosses the membrane as a helical span at residues 928 to 951; sequence KLSGYFVPFIVLVSIVTLLVWIII. Residues 952–981 are Extracellular-facing; that stretch reads GFQNFEIVEAYFPGYNRSISRTETIIRFAF. A helical transmembrane segment spans residues 982–1003; sequence QASITVLCIACPCSLGLATPTA. Topologically, residues 1004–1348 are cytoplasmic; sequence VMVGTGVGAQ…LSRKTVKRIR (345 aa). Residue Asp-1036 is the 4-aspartylphosphate intermediate of the active site. Position 1073 (Glu-1073) interacts with ATP. At Thr-1204 the chain carries Phosphothreonine. Positions 1293 and 1297 each coordinate Mg(2+). Residues 1349-1366 traverse the membrane as a helical segment; the sequence is INFVFALIYNLIGIPIAA. Residues 1367 to 1377 lie on the Extracellular side of the membrane; sequence GVFLPIGLVLQ. A helical transmembrane segment spans residues 1378 to 1397; it reads PWMGSAAMAASSVSVVLSSL. Residues 1398 to 1492 lie on the Cytoplasmic side of the membrane; sequence FLKLYRKPTY…DFREDDDTTL (95 aa). A phosphoserine mark is found at Ser-1422, Ser-1424, Ser-1452, Ser-1455, and Ser-1458. An Endocytosis signal motif is present at residues 1459–1460; it reads LL. Residues Ser-1461, Ser-1465, Ser-1468, and Ser-1478 each carry the phosphoserine modification. A PDZD11-binding region spans residues 1478 to 1492; it reads SLLVGDFREDDDTTL. The short motif at 1479-1480 is the Endocytosis signal element; sequence LL.

Belongs to the cation transport ATPase (P-type) (TC 3.A.3) family. Type IB subfamily. As to quaternary structure, monomer. Interacts with PDZD11. Interacts with ATOX1 and COMMD1. Interacts with TYRP1. Directly interacts with SOD3; this interaction is copper-dependent and is required for SOD3 activity. Expressed in hippocampal neuron (at protein level). Expressed in anterior pituitary gland (at protein level).

It is found in the golgi apparatus. Its subcellular location is the trans-Golgi network membrane. It localises to the cell membrane. The protein resides in the melanosome membrane. The protein localises to the early endosome membrane. It is found in the cell projection. Its subcellular location is the axon. It localises to the dendrite. The protein resides in the postsynaptic density. The catalysed reaction is Cu(+)(in) + ATP + H2O = Cu(+)(out) + ADP + phosphate + H(+). Functionally, ATP-driven copper (Cu(+)) ion pump that plays an important role in intracellular copper ion homeostasis. Within a catalytic cycle, acquires Cu(+) ion from donor protein on the cytoplasmic side of the membrane and delivers it to acceptor protein on the lumenal side. The transfer of Cu(+) ion across the membrane is coupled to ATP hydrolysis and is associated with a transient phosphorylation that shifts the pump conformation from inward-facing to outward-facing state. Under physiological conditions, at low cytosolic copper concentration, it is localized at the trans-Golgi network (TGN) where it transfers Cu(+) ions to cuproenzymes of the secretory pathway. Upon elevated cytosolic copper concentrations, it relocalizes to the plasma membrane where it is responsible for the export of excess Cu(+) ions. May play a dual role in neuron function and survival by regulating cooper efflux and neuronal transmission at the synapse as well as by supplying Cu(+) ions to enzymes such as PAM, TYR and SOD3. In the melanosomes of pigmented cells, provides copper cofactor to TYR to form an active TYR holoenzyme for melanin biosynthesis. This Rattus norvegicus (Rat) protein is Copper-transporting ATPase 1.